The chain runs to 551 residues: Cation/acetate symporter ActP (551 aa).

14 consecutive transmembrane segments (helical) span residues 5–25, 34–54, 77–97, 104–124, 150–170, 184–204, 207–227, 263–283, 304–324, 356–376, 406–426, 430–450, 469–489, and 498–518; these read HWSALSLFVLPALAQAEALTG, IQAIVMFLLFVGGTLYITYWA, GLAIAGDYMSAASFLGISALV, GLIYSIGFLIGWPIILFLIAE, LSACGSLVVVALYLIAQMVGA, VAVVLVGILMVLYVLFGGMLA, WVQIIKAVMLLSGATFMAIMV, ISALSLGLALMFGTAGLPHIL, GFIGYFYILTFIIGFGAILLV, FFLGFISAVAFATILAVVAGL, VSKITVIILGIVAIGLGILFE, IAFMVGLAFSIAASCNFPIII, LGLSTAVILMILGPTIWVTIL, and YEYPALFSMIAAFVGTWFFSI.

Belongs to the sodium:solute symporter (SSF) (TC 2.A.21) family.

Its subcellular location is the cell inner membrane. Functionally, transports acetate. The sequence is that of Cation/acetate symporter ActP from Yersinia pestis bv. Antiqua (strain Antiqua).